We begin with the raw amino-acid sequence, 297 residues long: Aspartate dehydrogenase domain-containing protein (297 aa).

2 positions are modified to phosphoserine: Ser-24 and Ser-172.

Belongs to the L-aspartate dehydrogenase family.

This is Aspartate dehydrogenase domain-containing protein from Rattus norvegicus (Rat).